A 392-amino-acid polypeptide reads, in one-letter code: B2 bradykinin receptor (392 aa).

Over 1–61 (MPCSWKLLGF…EWWSWLNAIQ (61 aa)) the chain is Extracellular. N-linked (GlcNAc...) asparagine glycans are attached at residues Asn29 and Asn40. A helical transmembrane segment spans residues 62 to 85 (APFLWVLFLLAALENLFVLSVFFL). At 86–94 (HKNSCTVAE) the chain is on the cytoplasmic side. The helical transmembrane segment at 95–119 (IYLGNLAAADLILACGLPFWAITIA) threads the bilayer. Over 120–132 (NNFDWVFGEVLCR) the chain is Extracellular. Cys131 and Cys212 form a disulfide bridge. Residues 133–154 (VVNTMIYMNLYSSICFLMLVSI) form a helical membrane-spanning segment. Residues 155–176 (DRYLALVKTMSMGRMRGVRWAK) are Cytoplasmic-facing. Tyr157 carries the post-translational modification Phosphotyrosine. A helical membrane pass occupies residues 177–199 (LYSLVIWGCTLLLSSPMLVFRTM). At 200–222 (REYSEEGHNVTACVIVYPSRSWE) the chain is on the extracellular side. N-linked (GlcNAc...) asparagine glycosylation is present at Asn208. Residues 223 to 249 (VFTNVLLNLVGFLLPLSVITFCTVRIL) traverse the membrane as a helical segment. Topologically, residues 250–268 (QVLRNNEMKKFKEVQTERK) are cytoplasmic. The chain crosses the membrane as a helical span at residues 269–293 (ATVLVLAVLGLFVLCWVPFQISTFL). At 294–312 (DTLLRLGVLSGCWDEHAVD) the chain is on the extracellular side. A helical membrane pass occupies residues 313-336 (VITQISSYVAYSNSGLNPLVYVIV). Topologically, residues 337-392 (GKRFRKKSREVYRVLCQKGGCMGEPVQMENSMGTLRTSISVERQIHKLQDWAGKKQ) are cytoplasmic. At Tyr348 the chain carries Phosphotyrosine. A lipid anchor (S-palmitoyl cysteine) is attached at Cys352. Ser367 carries the phosphoserine modification. Thr370 carries the post-translational modification Phosphothreonine. Ser374 and Ser376 each carry phosphoserine; by GRK6.

The protein belongs to the G-protein coupled receptor 1 family. Bradykinin receptor subfamily. BDKRB2 sub-subfamily. As to quaternary structure, forms a complex with PECAM1 and GNAQ. Interacts with PECAM1.

It localises to the cell membrane. Receptor for bradykinin. It is associated with G proteins that activate a phosphatidylinositol-calcium second messenger system. This chain is B2 bradykinin receptor (Bdkrb2), found in Mus musculus (Mouse).